The primary structure comprises 205 residues: Transcription termination/antitermination protein NusG (205 aa).

Positions 154 to 178 constitute a KOW domain; the sequence is GDHIMVLSGPFKDFEGDVIEVSPER.

Belongs to the NusG family.

Participates in transcription elongation, termination and antitermination. The protein is Transcription termination/antitermination protein NusG of Synechocystis sp. (strain ATCC 27184 / PCC 6803 / Kazusa).